The sequence spans 404 residues: Argininosuccinate synthase (404 aa).

ATP-binding positions include Ala-9–Ser-17 and Ala-36. Tyr-87 contributes to the L-citrulline binding site. Residue Gly-117 coordinates ATP. Residues Thr-119, Asn-123, and Asp-124 each coordinate L-aspartate. Residue Asn-123 participates in L-citrulline binding. 3 residues coordinate L-citrulline: Arg-127, Ser-176, and Glu-261.

It belongs to the argininosuccinate synthase family. Type 1 subfamily. In terms of assembly, homotetramer.

Its subcellular location is the cytoplasm. The catalysed reaction is L-citrulline + L-aspartate + ATP = 2-(N(omega)-L-arginino)succinate + AMP + diphosphate + H(+). The protein operates within amino-acid biosynthesis; L-arginine biosynthesis; L-arginine from L-ornithine and carbamoyl phosphate: step 2/3. The protein is Argininosuccinate synthase of Burkholderia pseudomallei (strain K96243).